The primary structure comprises 224 residues: Ribose-5-phosphate isomerase A 1 (224 aa).

Substrate is bound by residues 29–32 (SGST), 85–88 (DGAD), and 98–101 (KGGG). Glu107 functions as the Proton acceptor in the catalytic mechanism. Substrate is bound at residue Lys125.

Belongs to the ribose 5-phosphate isomerase family. Homodimer.

It carries out the reaction aldehydo-D-ribose 5-phosphate = D-ribulose 5-phosphate. The protein operates within carbohydrate degradation; pentose phosphate pathway; D-ribose 5-phosphate from D-ribulose 5-phosphate (non-oxidative stage): step 1/1. In terms of biological role, catalyzes the reversible conversion of ribose-5-phosphate to ribulose 5-phosphate. The sequence is that of Ribose-5-phosphate isomerase A 1 from Oceanobacillus iheyensis (strain DSM 14371 / CIP 107618 / JCM 11309 / KCTC 3954 / HTE831).